A 376-amino-acid chain; its full sequence is Multiphosphoryl transfer protein (376 aa).

The 141-residue stretch at 2-142 (FQLSVQDIHP…EELRALLMGE (141 aa)) folds into the PTS EIIA type-2 domain. H62 serves as the catalytic Tele-phosphohistidine intermediate; for EIIA activity. Phosphohistidine; by HPr is present on H62. The tract at residues 156-284 (TLDIVASDLL…LTSDDAPTDD (129 aa)) is m domain. One can recognise an HPr domain in the interval 285–375 (VLSAEFVVRN…DAIAAGLGEG (91 aa)). H299 (pros-phosphohistidine intermediate; for HPr activity) is an active-site residue. Phosphohistidine; by EI is present on H299.

It is found in the cytoplasm. In terms of biological role, the phosphoenolpyruvate-dependent sugar phosphotransferase system (sugar PTS), a major carbohydrate active transport system, catalyzes the phosphorylation of incoming sugar substrates concomitantly with their translocation across the cell membrane. The enzyme II FruAB PTS system is involved in fructose transport. This is Multiphosphoryl transfer protein from Escherichia coli O157:H7.